The chain runs to 539 residues: Chaperone Ric-8A (539 aa).

A disordered region spans residues 507–539 (MGITPSGNLAPMENAIRDMADERSSSDSDLGLD). Residues 521-532 (AIRDMADERSSS) are compositionally biased toward basic and acidic residues.

This sequence belongs to the synembryn family.

It is found in the cytoplasm. It localises to the cell cortex. In terms of biological role, chaperone that specifically binds and folds nascent G alpha proteins prior to G protein heterotrimer formation, promoting their stability and activity: folds GNAI1, GNAO1, GNA13 and GNAQ. Does not fold G(s) G-alpha proteins GNAS nor GNAL. Also acts as a guanine nucleotide exchange factor (GEF) for G alpha proteins by stimulating exchange of bound GDP for free GTP. This Gallus gallus (Chicken) protein is Chaperone Ric-8A (RIC8A).